Consider the following 81-residue polypeptide: Photosystem I iron-sulfur center (81 aa).

4Fe-4S ferredoxin-type domains lie at 2-31 (AHTVKIYDNCIGCTQCVRACPLDVLEMVPW) and 39-68 (MASAPRTEDCVGCKRCETACPTDFLSIRVY). Residues C11, C14, C17, C21, C48, C51, C54, and C58 each coordinate [4Fe-4S] cluster.

The eukaryotic PSI reaction center is composed of at least 11 subunits. The cofactor is [4Fe-4S] cluster.

The protein localises to the plastid. The protein resides in the chloroplast thylakoid membrane. It catalyses the reaction reduced [plastocyanin] + hnu + oxidized [2Fe-2S]-[ferredoxin] = oxidized [plastocyanin] + reduced [2Fe-2S]-[ferredoxin]. In terms of biological role, apoprotein for the two 4Fe-4S centers FA and FB of photosystem I (PSI); essential for photochemical activity. FB is the terminal electron acceptor of PSI, donating electrons to ferredoxin. The C-terminus interacts with PsaA/B/D and helps assemble the protein into the PSI complex. Required for binding of PsaD and PsaE to PSI. PSI is a plastocyanin/cytochrome c6-ferredoxin oxidoreductase, converting photonic excitation into a charge separation, which transfers an electron from the donor P700 chlorophyll pair to the spectroscopically characterized acceptors A0, A1, FX, FA and FB in turn. This chain is Photosystem I iron-sulfur center, found in Cyanidioschyzon merolae (strain NIES-3377 / 10D) (Unicellular red alga).